The sequence spans 233 residues: H-2 class II histocompatibility antigen, A-R alpha chain (233 aa).

The alpha-1 stretch occupies residues 1 to 88 (EDDIEADHVG…KRSNFTPAAN (88 aa)). Residues 1-195 (EDDIEADHVG…IPAPMSELTE (195 aa)) lie on the Extracellular side of the membrane. The segment at 89–182 (EAPQATVFPK…GLEEPVLKHW (94 aa)) is alpha-2. The Ig-like C1-type domain maps to 91–183 (PQATVFPKSP…LEEPVLKHWE (93 aa)). An intrachain disulfide couples C111 to C167. An N-linked (GlcNAc...) asparagine glycan is attached at N122. A connecting peptide region spans residues 183–195 (EPEIPAPMSELTE). A helical transmembrane segment spans residues 196–221 (TVVCALGLSVGLVGIVVGTIFIIQGL). Over 222–233 (RSGGTSRHPGPL) the chain is Cytoplasmic.

It belongs to the MHC class II family.

Its subcellular location is the membrane. This Mus musculus (Mouse) protein is H-2 class II histocompatibility antigen, A-R alpha chain (H2-Aa).